Here is a 182-residue protein sequence, read N- to C-terminus: MQFNIPTLLTLFRVILIPFFVVVFYLPFAWAPMVSALIFCIAAITDWFDGFLARRWNQSTRFGAFLDPVADKVLVAIAMVLVTEHYHSWWVTLPAATMIAREIIISALREWMAELGKRSSVAVSWIGKVKTTAQMVALAWLLWRPNIWVEYAGIALFFVAAVLTLWSMLQYLSAARGDLLDQ.

The Cytoplasmic portion of the chain corresponds to 2-12 (QFNIPTLLTLF). A helical transmembrane segment spans residues 13 to 37 (RVILIPFFVVVFYLPFAWAPMVSAL). Over 38 to 60 (IFCIAAITDWFDGFLARRWNQST) the chain is Periplasmic. Residues 61 to 81 (RFGAFLDPVADKVLVAIAMVL) traverse the membrane as a helical segment. The Cytoplasmic segment spans residues 82 to 86 (VTEHY). Residues 87-107 (HSWWVTLPAATMIAREIIISA) form a helical membrane-spanning segment. Residues 108–145 (LREWMAELGKRSSVAVSWIGKVKTTAQMVALAWLLWRP) lie on the Periplasmic side of the membrane. The helical transmembrane segment at 146–168 (NIWVEYAGIALFFVAAVLTLWSM) threads the bilayer. At 169–181 (LQYLSAARGDLLD) the chain is on the cytoplasmic side.

This sequence belongs to the CDP-alcohol phosphatidyltransferase class-I family.

Its subcellular location is the cell inner membrane. The catalysed reaction is a CDP-1,2-diacyl-sn-glycerol + sn-glycerol 3-phosphate = a 1,2-diacyl-sn-glycero-3-phospho-(1'-sn-glycero-3'-phosphate) + CMP + H(+). Its pathway is phospholipid metabolism; phosphatidylglycerol biosynthesis; phosphatidylglycerol from CDP-diacylglycerol: step 1/2. Functionally, catalyzes the conversion of cytidine diphosphate diacylglycerol (CDP-DG) and glycerol 3-phosphate into phosphatidylglycerol. Essential for the synthesis of anionic phospholipids, thereby playing a role in balancing the ratio of zwitterionic and anionic phospholipids, which is thought to be important for normal membrane function. The polypeptide is CDP-diacylglycerol--glycerol-3-phosphate 3-phosphatidyltransferase (Salmonella paratyphi A (strain ATCC 9150 / SARB42)).